We begin with the raw amino-acid sequence, 202 residues long: MAKYQTIEAAVRSEFGKGSARRARVAGQIPAVVYGADVESNLHVTVDHRTFAALVRQEGVNAVLELDIEGQKHLTMIKHIDQNVLTFNIDHLDLLAIKRGEKVEVDVPVIVEGEPAPGTMWVQDADTIKVEADVLSIPEEFKVSIEGLEFGAQVTAADIELDGDTTLVEDPETLIVNIVYPEVEAEETEDDEAASEGEEAAE.

The interval 182–202 is disordered; that stretch reads EVEAEETEDDEAASEGEEAAE. Acidic residues predominate over residues 183-202; the sequence is VEAEETEDDEAASEGEEAAE.

This sequence belongs to the bacterial ribosomal protein bL25 family. CTC subfamily. In terms of assembly, part of the 50S ribosomal subunit; part of the 5S rRNA/L5/L18/L25 subcomplex. Contacts the 5S rRNA. Binds to the 5S rRNA independently of L5 and L18.

In terms of biological role, this is one of the proteins that binds to the 5S RNA in the ribosome where it forms part of the central protuberance. The sequence is that of Large ribosomal subunit protein bL25 from Corynebacterium glutamicum (strain R).